The following is a 378-amino-acid chain: tRNA-specific 2-thiouridylase MnmA (378 aa).

Residues 7–14 (GLSGGVDS) and methionine 33 contribute to the ATP site. Residues 102 to 104 (NPD) form an interaction with target base in tRNA region. Catalysis depends on cysteine 107, which acts as the Nucleophile. Cysteine 107 and cysteine 209 are disulfide-bonded. Residue glycine 132 coordinates ATP. Residues 159–161 (KDQ) are interaction with tRNA. The active-site Cysteine persulfide intermediate is cysteine 209. Residues 316–317 (RY) are interaction with tRNA.

The protein belongs to the MnmA/TRMU family.

It is found in the cytoplasm. The enzyme catalyses S-sulfanyl-L-cysteinyl-[protein] + uridine(34) in tRNA + AH2 + ATP = 2-thiouridine(34) in tRNA + L-cysteinyl-[protein] + A + AMP + diphosphate + H(+). Catalyzes the 2-thiolation of uridine at the wobble position (U34) of tRNA, leading to the formation of s(2)U34. This Aster yellows witches'-broom phytoplasma (strain AYWB) protein is tRNA-specific 2-thiouridylase MnmA.